A 176-amino-acid chain; its full sequence is Large ribosomal subunit protein uL30 (176 aa).

This sequence belongs to the universal ribosomal protein uL30 family. As to quaternary structure, part of the 50S ribosomal subunit.

The protein is Large ribosomal subunit protein uL30 of Pyrobaculum arsenaticum (strain DSM 13514 / JCM 11321 / PZ6).